A 103-amino-acid polypeptide reads, in one-letter code: MKKIKLNDEVIIITGKNKDSTGAVIKVLDSKVLVEGLNLAKKHVRSNPNAGVTGGITEIEVPLAVSNVAIYNSATKKADRVGIRTNKDGIKERFFKSNNEVIV.

It belongs to the universal ribosomal protein uL24 family. In terms of assembly, part of the 50S ribosomal subunit.

Functionally, one of two assembly initiator proteins, it binds directly to the 5'-end of the 23S rRNA, where it nucleates assembly of the 50S subunit. One of the proteins that surrounds the polypeptide exit tunnel on the outside of the subunit. The sequence is that of Large ribosomal subunit protein uL24 from Ruthia magnifica subsp. Calyptogena magnifica.